The sequence spans 208 residues: Adenylyl-sulfate kinase (208 aa).

31 to 38 (GLSGSGKS) is a binding site for ATP. Catalysis depends on serine 105, which acts as the Phosphoserine intermediate.

This sequence belongs to the APS kinase family.

The catalysed reaction is adenosine 5'-phosphosulfate + ATP = 3'-phosphoadenylyl sulfate + ADP + H(+). It participates in sulfur metabolism; hydrogen sulfide biosynthesis; sulfite from sulfate: step 2/3. Catalyzes the synthesis of activated sulfate. The polypeptide is Adenylyl-sulfate kinase (Pseudomonas entomophila (strain L48)).